A 281-amino-acid polypeptide reads, in one-letter code: Pantothenate synthetase (281 aa).

ATP is bound at residue 26-33; it reads MGYLHQGH. His-33 acts as the Proton donor in catalysis. A (R)-pantoate-binding site is contributed by Gln-57. Residue Gln-57 coordinates beta-alanine. 143–146 lines the ATP pocket; it reads GQKD. Residue Gln-149 coordinates (R)-pantoate. Residues Val-172 and 180–183 contribute to the ATP site; that span reads LSSR.

Belongs to the pantothenate synthetase family. Homodimer.

The protein resides in the cytoplasm. The catalysed reaction is (R)-pantoate + beta-alanine + ATP = (R)-pantothenate + AMP + diphosphate + H(+). It participates in cofactor biosynthesis; (R)-pantothenate biosynthesis; (R)-pantothenate from (R)-pantoate and beta-alanine: step 1/1. Its function is as follows. Catalyzes the condensation of pantoate with beta-alanine in an ATP-dependent reaction via a pantoyl-adenylate intermediate. This Chloroflexus aurantiacus (strain ATCC 29366 / DSM 635 / J-10-fl) protein is Pantothenate synthetase.